The chain runs to 657 residues: DNA-directed RNA polymerase III subunit RPC3 (657 aa).

The tract at residues 390-450 (HSNQSLKRKQ…LDLDEDDSDP (61 aa)) is disordered. Residues 428–448 (EESEEENEEGDANLDLDEDDS) show a composition bias toward acidic residues. The interval 584–605 (LTWNLARLISKLETLKEENATL) is leucine-zipper.

This sequence belongs to the RNA polymerase beta chain family. Component of the RNA polymerase III (Pol III) complex consisting of 17 subunits.

The protein localises to the nucleus. DNA-dependent RNA polymerase catalyzes the transcription of DNA into RNA using the four ribonucleoside triphosphates as substrates. Specific core component of RNA polymerase III which synthesizes small RNAs, such as 5S rRNA and tRNAs. This is DNA-directed RNA polymerase III subunit RPC3 (RPC82) from Kluyveromyces lactis (strain ATCC 8585 / CBS 2359 / DSM 70799 / NBRC 1267 / NRRL Y-1140 / WM37) (Yeast).